The primary structure comprises 308 residues: Protoheme IX farnesyltransferase (308 aa).

A run of 8 helical transmembrane segments spans residues 20 to 40 (LLAYLALTKPRVIELLLVTAI), 50 to 70 (AIHPLLMLNTLVGGMMAAAGA), 102 to 122 (NALALGLTLTVISFFWLWCAT), 124 to 144 (LLAGVLALVTVAFYVFVYTLW), 149 to 169 (TSQNVVWGGAAGCMPVMIGWS), 170 to 190 (AITGTIAWPALAMFAIIFFWT), 227 to 249 (LIYTWLTVAATLVLALATSWLYG), and 288 to 308 (YLAVVFCALAVDSVIALPTLH).

Belongs to the UbiA prenyltransferase family. Protoheme IX farnesyltransferase subfamily.

Its subcellular location is the cell membrane. The catalysed reaction is heme b + (2E,6E)-farnesyl diphosphate + H2O = Fe(II)-heme o + diphosphate. The protein operates within porphyrin-containing compound metabolism; heme O biosynthesis; heme O from protoheme: step 1/1. Its function is as follows. Converts heme B (protoheme IX) to heme O by substitution of the vinyl group on carbon 2 of heme B porphyrin ring with a hydroxyethyl farnesyl side group. The sequence is that of Protoheme IX farnesyltransferase from Mycobacterium tuberculosis (strain ATCC 25618 / H37Rv).